Here is a 71-residue protein sequence, read N- to C-terminus: Vitellogenin-B2 (71 aa).

The N-terminal stretch at 1 to 15 is a signal peptide; it reads MRGIILALLLALAGC. The Vitellogenin domain maps to 24–71; it reads FSESKTYVYNYEGIILNGIPENGLARSGIKLNCKVELSGYAQRSYMLK.

As to expression, produced by the liver, secreted into the blood and then sequestered by receptor mediated endocytosis into growing oocytes, where it is generally cleaved, giving rise to the respective yolk components.

Functionally, precursor of the major egg-yolk proteins that are sources of nutrients during early development of oviparous organisms. The sequence is that of Vitellogenin-B2 from Xenopus laevis (African clawed frog).